Reading from the N-terminus, the 237-residue chain is Uridylate kinase (237 aa).

Residue 11–14 (KLSG) coordinates ATP. G53 is a binding site for UMP. ATP is bound by residues G54 and R58. Residues D73 and 134–141 (TGNPFFTT) contribute to the UMP site. Positions 161, 167, and 170 each coordinate ATP.

It belongs to the UMP kinase family. Homohexamer.

Its subcellular location is the cytoplasm. The catalysed reaction is UMP + ATP = UDP + ADP. The protein operates within pyrimidine metabolism; CTP biosynthesis via de novo pathway; UDP from UMP (UMPK route): step 1/1. Its activity is regulated as follows. Inhibited by UTP. Its function is as follows. Catalyzes the reversible phosphorylation of UMP to UDP. The chain is Uridylate kinase from Burkholderia thailandensis (strain ATCC 700388 / DSM 13276 / CCUG 48851 / CIP 106301 / E264).